A 130-amino-acid chain; its full sequence is Small ribosomal subunit protein uS9 (130 aa).

The protein belongs to the universal ribosomal protein uS9 family.

This is Small ribosomal subunit protein uS9 from Thiobacillus denitrificans (strain ATCC 25259 / T1).